The chain runs to 248 residues: uncharacterized protein (248 aa).

This is an uncharacterized protein from Streptococcus pyogenes serotype M6 (strain ATCC BAA-946 / MGAS10394).